Reading from the N-terminus, the 179-residue chain is Embryo-specific protein ATS3A (179 aa).

Positions 1 to 22 are cleaved as a signal peptide; it reads MLRLAIPLFLFALCSFTLFSSA. One can recognise a PLAT domain in the interval 48-158; the sequence is CSYTVIIKTS…NSVWYGFNVC (111 aa).

As to quaternary structure, interacts with EULS3 (via N-terminus). Expressed in roots, rosette leaves, stems, cauline leaves and flowers.

The protein resides in the secreted. Its function is as follows. May play a role during embryo development. The chain is Embryo-specific protein ATS3A from Arabidopsis thaliana (Mouse-ear cress).